The sequence spans 397 residues: Bifunctional enzyme IspD/IspF (397 aa).

The segment at 1–236 (MSIAAVILAA…QKKMQMFPDI (236 aa)) is 2-C-methyl-D-erythritol 4-phosphate cytidylyltransferase. The segment at 237–397 (RTGNGYDVHS…NVLYPGEIPK (161 aa)) is 2-C-methyl-D-erythritol 2,4-cyclodiphosphate synthase. A divalent metal cation is bound by residues Asp-243 and His-245. 4-CDP-2-C-methyl-D-erythritol 2-phosphate is bound by residues 243–245 (DVH) and 269–270 (HS). His-277 provides a ligand contact to a divalent metal cation. Residues 291-293 (DIG), 367-370 (TTNE), Phe-374, and Arg-377 each bind 4-CDP-2-C-methyl-D-erythritol 2-phosphate.

This sequence in the N-terminal section; belongs to the IspD/TarI cytidylyltransferase family. IspD subfamily. The protein in the C-terminal section; belongs to the IspF family. The cofactor is a divalent metal cation.

It catalyses the reaction 2-C-methyl-D-erythritol 4-phosphate + CTP + H(+) = 4-CDP-2-C-methyl-D-erythritol + diphosphate. It carries out the reaction 4-CDP-2-C-methyl-D-erythritol 2-phosphate = 2-C-methyl-D-erythritol 2,4-cyclic diphosphate + CMP. It functions in the pathway isoprenoid biosynthesis; isopentenyl diphosphate biosynthesis via DXP pathway; isopentenyl diphosphate from 1-deoxy-D-xylulose 5-phosphate: step 2/6. It participates in isoprenoid biosynthesis; isopentenyl diphosphate biosynthesis via DXP pathway; isopentenyl diphosphate from 1-deoxy-D-xylulose 5-phosphate: step 4/6. Functionally, bifunctional enzyme that catalyzes the formation of 4-diphosphocytidyl-2-C-methyl-D-erythritol from CTP and 2-C-methyl-D-erythritol 4-phosphate (MEP) (IspD), and catalyzes the conversion of 4-diphosphocytidyl-2-C-methyl-D-erythritol 2-phosphate (CDP-ME2P) to 2-C-methyl-D-erythritol 2,4-cyclodiphosphate (ME-CPP) with a corresponding release of cytidine 5-monophosphate (CMP) (IspF). The chain is Bifunctional enzyme IspD/IspF from Bartonella henselae (strain ATCC 49882 / DSM 28221 / CCUG 30454 / Houston 1) (Rochalimaea henselae).